A 219-amino-acid chain; its full sequence is FMN-dependent NADH:quinone oxidoreductase 2 (219 aa).

FMN-binding positions include Ser10 and 23 to 25 (SIS).

Belongs to the azoreductase type 1 family. In terms of assembly, homodimer. The cofactor is FMN.

The enzyme catalyses 2 a quinone + NADH + H(+) = 2 a 1,4-benzosemiquinone + NAD(+). The catalysed reaction is N,N-dimethyl-1,4-phenylenediamine + anthranilate + 2 NAD(+) = 2-(4-dimethylaminophenyl)diazenylbenzoate + 2 NADH + 2 H(+). Functionally, quinone reductase that provides resistance to thiol-specific stress caused by electrophilic quinones. In terms of biological role, also exhibits azoreductase activity. Catalyzes the reductive cleavage of the azo bond in aromatic azo compounds to the corresponding amines. The polypeptide is FMN-dependent NADH:quinone oxidoreductase 2 (Colwellia psychrerythraea (strain 34H / ATCC BAA-681) (Vibrio psychroerythus)).